The following is a 329-amino-acid chain: Tryptophan--tRNA ligase (329 aa).

Residues 9–11 (QPS) and 17–18 (GN) contribute to the ATP site. Residues 10–18 (PSGIPTIGN) carry the 'HIGH' region motif. D133 provides a ligand contact to L-tryptophan. ATP-binding positions include 145 to 147 (GDD), V184, and 193 to 197 (KMSKS). Residues 193–197 (KMSKS) carry the 'KMSKS' region motif.

This sequence belongs to the class-I aminoacyl-tRNA synthetase family. In terms of assembly, homodimer.

Its subcellular location is the cytoplasm. It catalyses the reaction tRNA(Trp) + L-tryptophan + ATP = L-tryptophyl-tRNA(Trp) + AMP + diphosphate + H(+). Catalyzes the attachment of tryptophan to tRNA(Trp). This is Tryptophan--tRNA ligase from Staphylococcus aureus (strain MSSA476).